Consider the following 403-residue polypeptide: Metacaspase-1A (403 aa).

The disordered stretch occupies residues 1 to 93 (MQHHHHSSYG…PPTDPVAFGH (93 aa)). Residues 18–31 (GQAYRQQQPYYGQP) show a composition bias toward low complexity. Over residues 32–55 (SPQPYAQPPPPNYQRPSGYGPPPS) the composition is skewed to pro residues. Active-site residues include H194 and C250.

The protein belongs to the peptidase C14B family.

Involved in cell death (apoptosis). The chain is Metacaspase-1A (casA) from Aspergillus terreus (strain NIH 2624 / FGSC A1156).